The sequence spans 358 residues: MAQVGSAGPGACGRRGAGAGAGPERTTWRWAPALLWLATAAAVAGDPSRRQWPVPYKRFSFRPEPDPYCQAKYTFCPTGSPIPVMKDDDVIEVFRLQAPVWEFKYGDLLGHLKIMHDAIGFRSTLTEKNYTMEWYELFQLGNCTFPHLRPEMNAPFWCNQGAACFFEGIDDSHWKENGTLVLVATISGGMFNRMAKWVKQDNETGIYYETWTVQASPERGAERWFESYDCSKFVLRTYEKLAELGADFKKIETNYTRIFLYSGEPTYLGNETSVFGPTGNKTLALAIKKFYYPFKPHLSTKEFLLSLLQIFDAVVIHREFYLFYNFEYWFLPMKYPFIKITYEEIPLPNRKNRTLSGL.

A disordered region spans residues 1–23; the sequence is MAQVGSAGPGACGRRGAGAGAGP. Residues 1–29 are Cytoplasmic-facing; sequence MAQVGSAGPGACGRRGAGAGAGPERTTWR. Gly residues predominate over residues 7 to 21; it reads AGPGACGRRGAGAGA. Residues 30–46 form a helical; Signal-anchor for type II membrane protein membrane-spanning segment; it reads WAPALLWLATAAAVAGD. The Lumenal segment spans residues 47 to 358; the sequence is PSRRQWPVPY…NRKNRTLSGL (312 aa). Intrachain disulfides connect C69–C158 and C76–C164. Residue H116 is the Proton acceptor of the active site. 4 N-linked (GlcNAc...) asparagine glycosylation sites follow: N129, N142, N177, and N202. C230 (nucleophile; Acyl-thioester intermediate) is an active-site residue. N-linked (GlcNAc...) asparagine glycosylation is found at N254, N270, and N280. The membrane-anchoring stretch occupies residues 303 to 342; it reads FLLSLLQIFDAVVIHREFYLFYNFEYWFLPMKYPFIKITY. N-linked (GlcNAc...) asparagine glycosylation occurs at N352.

This sequence belongs to the CLN5 family. Multimer. Interacts with SORT1, RAB5A and RAB7A. Interacts with PPT1, TPP1, CLN3, CLN6, CLN8, ATP5F1A and ATP5F1B. N-glycosylated with both high mannose and complex type sugars. Glycosylation is important for proper folding and trafficking to the lysosomes. In terms of processing, the type II membrane signal anchor is proteolytically cleaved to produce a mature form that is transported to the lysosomes (Bis(monoacylglycero)phosphate synthase CLN5, secreted form). Post-translationally, can undergo proteolytic cleavage at the C-terminus, probably by a cysteine protease and may involve the removal of approximately 10-15 residues from the C-terminal end.

The protein resides in the lysosome. It is found in the membrane. It catalyses the reaction S-hexadecanoyl-L-cysteinyl-[protein] + H2O = L-cysteinyl-[protein] + hexadecanoate + H(+). The catalysed reaction is 2 1-acyl-sn-glycero-3-phospho-(1'-sn-glycerol) = 1-acyl-sn-glycero-3-phospho-(3'-acyl-sn-1'-glycerol) + sn-glycero-3-phospho-(1'-sn-glycerol). The enzyme catalyses 2 1-(9Z-octadecenoyl)-sn-glycero-3-phospho-(1'-sn-glycerol) = 1-(9Z-octadecenoyl)-sn-glycero-3-phospho-(3'-(9Z-octadecenoyl)-1'-sn-glycerol) + sn-glycero-3-phospho-(1'-sn-glycerol). It carries out the reaction 2 1-octadecanoyl-sn-glycero-3-phospho-(1'-sn-glycerol) = 1-octadecanoyl-sn-glycero-3-phospho-(3'-octadecanoyl-1'-sn-glycerol) + sn-glycero-3-phospho-(1'-sn-glycerol). It catalyses the reaction 2 1-hexadecanoyl-sn-glycero-3-phospho-(1'-sn-glycerol) = 1-hexadecanoyl-sn-glycero-3-phospho-(3'-hexadecanoyl-1'-sn-glycerol) + sn-glycero-3-phospho-(1'-sn-glycerol). The catalysed reaction is 2 1-tetradecanoyl-sn-glycero-3-phospho-(1'-sn-glycerol) = 1-tetradecanoyl-sn-glycero-3-phospho-(3'-tetradecanoyl-1'-sn-glycerol) + sn-glycero-3-phospho-(1'-sn-glycerol). Catalyzes the synthesis of bis(monoacylglycero)phosphate (BMP) via transacylation of 2 molecules of lysophosphatidylglycerol (LPG). BMP also known as lysobisphosphatidic acid plays a key role in the formation of intraluminal vesicles and in maintaining intracellular cholesterol homeostasis. Can use only LPG as the exclusive lysophospholipid acyl donor for base exchange and displays BMP synthase activity towards various LPGs (LPG 14:0, LPG 16:0, LPG 18:0, LPG 18:1) with a higher preference for longer chain lengths. Plays a role in influencing the retrograde trafficking of lysosomal sorting receptors SORT1 and IGF2R from the endosomes to the trans-Golgi network by controlling the recruitment of retromer complex to the endosomal membrane. Regulates the localization and activation of RAB7A which is required to recruit the retromer complex to the endosomal membrane. Functionally, exhibits palmitoyl protein thioesterase (S-depalmitoylation) activity in vitro and most likely plays a role in protein S-depalmitoylation. This chain is Bis(monoacylglycero)phosphate synthase CLN5 (CLN5), found in Bos taurus (Bovine).